Consider the following 328-residue polypeptide: Tetraacyldisaccharide 4'-kinase (328 aa).

An ATP-binding site is contributed by 55–62 (TAGGNGKT).

The protein belongs to the LpxK family.

The catalysed reaction is a lipid A disaccharide + ATP = a lipid IVA + ADP + H(+). Its pathway is glycolipid biosynthesis; lipid IV(A) biosynthesis; lipid IV(A) from (3R)-3-hydroxytetradecanoyl-[acyl-carrier-protein] and UDP-N-acetyl-alpha-D-glucosamine: step 6/6. Transfers the gamma-phosphate of ATP to the 4'-position of a tetraacyldisaccharide 1-phosphate intermediate (termed DS-1-P) to form tetraacyldisaccharide 1,4'-bis-phosphate (lipid IVA). The chain is Tetraacyldisaccharide 4'-kinase from Shigella flexneri serotype 5b (strain 8401).